The following is a 201-amino-acid chain: MSDLTNADNEREPRLITETGLDQRLADIIEPVLVDLGFRLIRVRMMNQNGATMQVMAERNDGTMTVQDCEEVSMAISPVLDVEDPVDKEYHLEVSSPGIDRPMVRKSDFVRWQGHLVKCETSILIDNRKRFRGKIVEAGTDGFTLERDQIAYGEEQKVTIPFTALSDAKLILTDDLIRDALRADKLAKAQAANQNEADDEE.

The protein belongs to the RimP family.

Its subcellular location is the cytoplasm. Its function is as follows. Required for maturation of 30S ribosomal subunits. This chain is Ribosome maturation factor RimP, found in Rhizobium johnstonii (strain DSM 114642 / LMG 32736 / 3841) (Rhizobium leguminosarum bv. viciae).